Here is a 710-residue protein sequence, read N- to C-terminus: DNA-directed RNA polymerase III subunit RPC5 (710 aa).

The segment covering 146 to 155 (DAKHREREAA) has biased composition (basic and acidic residues). Positions 146 to 169 (DAKHREREAANEAGDSSQDEAEED) are disordered. 2 positions are modified to phosphoserine: serine 161 and serine 162. Residue lysine 171 forms a Glycyl lysine isopeptide (Lys-Gly) (interchain with G-Cter in SUMO2) linkage. Position 192 is a phosphoserine (serine 192). At tyrosine 224 the chain carries Phosphotyrosine. Lysine 432 participates in a covalent cross-link: Glycyl lysine isopeptide (Lys-Gly) (interchain with G-Cter in SUMO2). Lysine 498 participates in a covalent cross-link: Glycyl lysine isopeptide (Lys-Gly) (interchain with G-Cter in SUMO1); alternate. Lysine 498 participates in a covalent cross-link: Glycyl lysine isopeptide (Lys-Gly) (interchain with G-Cter in SUMO2); alternate. A disordered region spans residues 498-526 (KEEPLSEEEADGAELEAEEEEPMDTAPST). A compositionally biased stretch (acidic residues) spans 502 to 520 (LSEEEADGAELEAEEEEPM). Serine 503 is modified (phosphoserine). Residues 558–710 (NPVACELKAF…MWYLKGTVQS (153 aa)) are required for Pol III complex stability. A Glycyl lysine isopeptide (Lys-Gly) (interchain with G-Cter in SUMO2) cross-link involves residue lysine 661.

As to quaternary structure, component of the RNA polymerase III complex consisting of at least 17 subunits: a ten-subunit horseshoe-shaped catalytic core composed of POLR3A/RPC1, POLR3B/RPC2, POLR1C/RPAC1, POLR1D/RPAC2, POLR3K/RPC10, POLR2E/RPABC1, POLR2F/RPABC2, POLR2H/RPABC3, POLR2K/RPABC4 and POLR2L/RPABC5; the stalk composed of two subunits POLR3H/RPC8 and CRCP/RPC9, forming a structural mobile part that protrudes out of the core and functions primarily in transcription initiation; and additional subunits homologous to general transcription factors of the RNA polymerase II machinery, POLR3D/RPC4-POLR3E/RPC5 heterodimer and POLR3/CRPC3-POLR3F/RPC6-POLR3G/RPC7 heterotrimer.

It localises to the nucleus. In terms of biological role, DNA-dependent RNA polymerase catalyzes the transcription of DNA into RNA using the four ribonucleoside triphosphates as substrates. Specific peripheric component of RNA polymerase III (Pol III) which synthesizes small non-coding RNAs including 5S rRNA, snRNAs, tRNAs and miRNAs from at least 500 distinct genomic loci. Assembles with POLR3D/RPC4 forming a subcomplex that binds the Pol III core. Enables recruitment of Pol III at transcription initiation site and drives transcription initiation from both type 2 and type 3 DNA promoters. Required for efficient transcription termination and reinitiation. Plays a key role in sensing and limiting infection by intracellular bacteria and DNA viruses. Acts as a nuclear and cytosolic DNA sensor involved in innate immune response. Can sense non-self dsDNA that serves as template for transcription into dsRNA. The non-self RNA polymerase III transcripts, such as Epstein-Barr virus-encoded RNAs (EBERs) induce type I interferon and NF-kappa-B through the RIG-I pathway. The polypeptide is DNA-directed RNA polymerase III subunit RPC5 (Mus musculus (Mouse)).